The chain runs to 419 residues: D-amino acid dehydrogenase (419 aa).

3-17 (VLILGSGVVGVTSAY) provides a ligand contact to FAD.

This sequence belongs to the DadA oxidoreductase family. Requires FAD as cofactor.

The catalysed reaction is a D-alpha-amino acid + A + H2O = a 2-oxocarboxylate + AH2 + NH4(+). The protein operates within amino-acid degradation; D-alanine degradation; NH(3) and pyruvate from D-alanine: step 1/1. Oxidative deamination of D-amino acids. The protein is D-amino acid dehydrogenase of Chromohalobacter salexigens (strain ATCC BAA-138 / DSM 3043 / CIP 106854 / NCIMB 13768 / 1H11).